Reading from the N-terminus, the 513-residue chain is ATP synthase subunit alpha (513 aa).

An ATP-binding site is contributed by 169–176; the sequence is GDRQTGKT.

This sequence belongs to the ATPase alpha/beta chains family. F-type ATPases have 2 components, CF(1) - the catalytic core - and CF(0) - the membrane proton channel. CF(1) has five subunits: alpha(3), beta(3), gamma(1), delta(1), epsilon(1). CF(0) has three main subunits: a(1), b(2) and c(9-12). The alpha and beta chains form an alternating ring which encloses part of the gamma chain. CF(1) is attached to CF(0) by a central stalk formed by the gamma and epsilon chains, while a peripheral stalk is formed by the delta and b chains.

It localises to the cell inner membrane. It catalyses the reaction ATP + H2O + 4 H(+)(in) = ADP + phosphate + 5 H(+)(out). In terms of biological role, produces ATP from ADP in the presence of a proton gradient across the membrane. The alpha chain is a regulatory subunit. The protein is ATP synthase subunit alpha of Shewanella putrefaciens (strain CN-32 / ATCC BAA-453).